The following is a 787-amino-acid chain: Phenylalanine--tRNA ligase beta subunit (787 aa).

The region spanning 39-149 (APAFAGVVIA…EDAPVGTNIR (111 aa)) is the tRNA-binding domain. The B5 domain maps to 400–475 (PEAKQVGLRL…RVYGYENIPD (76 aa)). Residues aspartate 453, aspartate 459, glutamate 462, and glutamate 463 each coordinate Mg(2+). Residues 694-786 (SKFQPVRRDL…AATAAGARLR (93 aa)) form the FDX-ACB domain.

This sequence belongs to the phenylalanyl-tRNA synthetase beta subunit family. Type 1 subfamily. In terms of assembly, tetramer of two alpha and two beta subunits. The cofactor is Mg(2+).

It localises to the cytoplasm. It catalyses the reaction tRNA(Phe) + L-phenylalanine + ATP = L-phenylalanyl-tRNA(Phe) + AMP + diphosphate + H(+). The protein is Phenylalanine--tRNA ligase beta subunit (pheT) of Neisseria meningitidis serogroup B (strain ATCC BAA-335 / MC58).